The chain runs to 251 residues: 3-deoxy-manno-octulosonate cytidylyltransferase (251 aa).

The protein belongs to the KdsB family.

Its subcellular location is the cytoplasm. It carries out the reaction 3-deoxy-alpha-D-manno-oct-2-ulosonate + CTP = CMP-3-deoxy-beta-D-manno-octulosonate + diphosphate. It functions in the pathway nucleotide-sugar biosynthesis; CMP-3-deoxy-D-manno-octulosonate biosynthesis; CMP-3-deoxy-D-manno-octulosonate from 3-deoxy-D-manno-octulosonate and CTP: step 1/1. Its pathway is bacterial outer membrane biogenesis; lipopolysaccharide biosynthesis. Its function is as follows. Activates KDO (a required 8-carbon sugar) for incorporation into bacterial lipopolysaccharide in Gram-negative bacteria. The protein is 3-deoxy-manno-octulosonate cytidylyltransferase of Rhizobium etli (strain CIAT 652).